Reading from the N-terminus, the 553-residue chain is Ribonuclease J 2 (553 aa).

Zn(2+)-binding residues include His69, His71, His138, and Asp160. Position 361-365 (361-365 (RVSGH)) interacts with substrate.

Belongs to the metallo-beta-lactamase superfamily. RNA-metabolizing metallo-beta-lactamase-like family. Bacterial RNase J subfamily. As to quaternary structure, homodimer, may be a subunit of the RNA degradosome. Zn(2+) serves as cofactor.

Its subcellular location is the cytoplasm. Functionally, an RNase that has 5'-3' exonuclease and possibly endonuclease activity. Involved in maturation of rRNA and in some organisms also mRNA maturation and/or decay. Has an overlapping but not completely redundant role with RNase J1 in the decay of mRNA. In Streptococcus pyogenes serotype M3 (strain ATCC BAA-595 / MGAS315), this protein is Ribonuclease J 2.